Consider the following 1441-residue polypeptide: Tripeptidyl-peptidase 2 (1441 aa).

The segment at 62–89 (AESSERSNSSKKTTNKEQSDKSAESRMA) is disordered. Over residues 75-85 (TNKEQSDKSAE) the composition is skewed to basic and acidic residues. The Peptidase S8 domain maps to 107–608 (ETGVLNFLQK…HGLLNVEKAF (502 aa)). Catalysis depends on charge relay system residues aspartate 131, histidine 359, and serine 549. Residues 1139-1155 (TANGAKPKAPATPQAAT) are compositionally biased toward low complexity. Disordered stretches follow at residues 1139 to 1190 (TANG…KANA) and 1255 to 1274 (QKTSPPEAGESADKQKEDQK). Position 1182 is a phosphoserine (serine 1182). Residues 1265 to 1274 (SADKQKEDQK) are compositionally biased toward basic and acidic residues.

It belongs to the peptidase S8 family. In terms of assembly, homooligomer; forms a complex of 6 MDa probably composed of 40 subunits. Forms a structure consisting of 2 segmented and twisted strands that form a spindle-shaped structure. Each strand is composed of 10 segments (a segment being a homodimer oriented head to head), stacking of these segments leads to the formation of a twisted single strand. 2 strands compose the fully assembled spindle.

The protein localises to the cytoplasm. The catalysed reaction is Release of an N-terminal tripeptide from a polypeptide.. With respect to regulation, inhibited by phenylmethanesulfonyl fluoride (PMSF) and butabindide, but not by peptidase inhibitor pepstatin, EDTA, nor bestatin. In terms of biological role, component of the proteolytic cascade acting downstream of the 26S proteasome in the ubiquitin-proteasome pathway. Efficiently cleaves Ala-Ala-Ala-polypeptide and Pro-Pro-Ala-polypeptide, Val-Leu-Lys-polypeptide only at high concentration. Does not cleave Ala-Phe-Pro-polypeptide nor Pro-Leu-Gly-polypeptide. This Drosophila melanogaster (Fruit fly) protein is Tripeptidyl-peptidase 2 (TppII).